The primary structure comprises 161 residues: NADH-quinone oxidoreductase subunit I (161 aa).

2 consecutive 4Fe-4S ferredoxin-type domains span residues arginine 53–glutamate 82 and threonine 92–asparagine 121. [4Fe-4S] cluster contacts are provided by cysteine 62, cysteine 65, cysteine 68, cysteine 72, cysteine 101, cysteine 104, cysteine 107, and cysteine 111.

This sequence belongs to the complex I 23 kDa subunit family. In terms of assembly, NDH-1 is composed of 14 different subunits. Subunits NuoA, H, J, K, L, M, N constitute the membrane sector of the complex. [4Fe-4S] cluster is required as a cofactor.

The protein resides in the cell inner membrane. It carries out the reaction a quinone + NADH + 5 H(+)(in) = a quinol + NAD(+) + 4 H(+)(out). In terms of biological role, NDH-1 shuttles electrons from NADH, via FMN and iron-sulfur (Fe-S) centers, to quinones in the respiratory chain. The immediate electron acceptor for the enzyme in this species is believed to be ubiquinone. Couples the redox reaction to proton translocation (for every two electrons transferred, four hydrogen ions are translocated across the cytoplasmic membrane), and thus conserves the redox energy in a proton gradient. The sequence is that of NADH-quinone oxidoreductase subunit I from Hyphomonas neptunium (strain ATCC 15444).